A 247-amino-acid polypeptide reads, in one-letter code: Disease resistance protein BAK6 (247 aa).

Residues 1–24 form the signal peptide; sequence MAAVQFAAAGVLTGLLALATLASC. Asn-66, Asn-104, and Asn-113 each carry an N-linked (GlcNAc...) asparagine glycan. 6 LRR repeats span residues 90 to 114, 116 to 138, 139 to 161, 162 to 186, 188 to 210, and 213 to 237; these read LESL…LGNL, DLIS…LGSI, STLR…SFGN, LTSL…LGNI, SLQF…VLSL, and VGNL…GLRV. 2 N-linked (GlcNAc...) asparagine glycosylation sites follow: Asn-150 and Asn-161. An N-linked (GlcNAc...) asparagine glycan is attached at Asn-215.

In terms of assembly, interacts with WAK17 isoform 1; the interaction is direct. (Microbial infection) Interacts with G.zeae CFEM1; the interaction is direct. Interacts with G.zeae CFEMN1; the interaction is direct. Interacts with G.zeae CFEM5; the interaction is direct.

Functionally, contributes to activation of the hypersensitive response, a form of programmed cell death, upon fungal infection. May sense the presence of fungal material and relay the signal to WAK17 isoform 1. This Zea mays (Maize) protein is Disease resistance protein BAK6.